We begin with the raw amino-acid sequence, 455 residues long: 2-oxoisovalerate dehydrogenase subunit alpha, mitochondrial (455 aa).

A mitochondrion-targeting transit peptide spans Met1–Phe55. Thiamine diphosphate-binding residues include Tyr168 and Arg169. Ser216 provides a ligand contact to K(+). Ser217 is a binding site for thiamine diphosphate. The K(+) site is built by Pro218, Thr221, and Gln222. Glu248 contributes to the Mg(2+) binding site. The thiamine diphosphate site is built by Gly249, Ala250, and Arg275. Positions 277 and 279 each coordinate Mg(2+). Thiamine diphosphate is bound at residue His346. Residue Ser347 is modified to Phosphoserine; by BCKDK. Residue Thr348 is modified to Phosphothreonine. Ser349 and Ser357 each carry phosphoserine. Lys366 carries the N6-acetyllysine; alternate modification. Position 366 is an N6-succinyllysine; alternate (Lys366). Lys390 bears the N6-succinyllysine mark.

Belongs to the BCKDHA family. Heterotetramer of 2 alpha/BCKDHA and 2 beta chains/BCKDHB that forms the branched-chain alpha-keto acid decarboxylase (E1) component of the BCKD complex. The branched-chain alpha-ketoacid dehydrogenase is a large complex composed of three major building blocks E1, E2 and E3. It is organized around E2, a 24-meric cubic core composed of DBT, to which are associated 6 to 12 copies of E1, and approximately 6 copies of the dehydrogenase E3, a DLD dimer. Interacts with PPM1K. Requires thiamine diphosphate as cofactor. Mg(2+) is required as a cofactor. In terms of processing, phosphorylated at Ser-347 by BCKDK and dephosphorylated by protein phosphatase PPM1K. Expressed in kidney (at protein level).

It localises to the mitochondrion matrix. It catalyses the reaction N(6)-[(R)-lipoyl]-L-lysyl-[protein] + 3-methyl-2-oxobutanoate + H(+) = N(6)-[(R)-S(8)-2-methylpropanoyldihydrolipoyl]-L-lysyl-[protein] + CO2. Together with BCKDHB forms the heterotetrameric E1 subunit of the mitochondrial branched-chain alpha-ketoacid dehydrogenase (BCKD) complex. The BCKD complex catalyzes the multi-step oxidative decarboxylation of alpha-ketoacids derived from the branched-chain amino-acids valine, leucine and isoleucine producing CO2 and acyl-CoA which is subsequently utilized to produce energy. The E1 subunit catalyzes the first step with the decarboxylation of the alpha-ketoacid forming an enzyme-product intermediate. A reductive acylation mediated by the lipoylamide cofactor of E2 extracts the acyl group from the E1 active site for the next step of the reaction. This is 2-oxoisovalerate dehydrogenase subunit alpha, mitochondrial (BCKDHA) from Bos taurus (Bovine).